A 513-amino-acid polypeptide reads, in one-letter code: Putative ribose/galactose/methyl galactoside import ATP-binding protein (513 aa).

ABC transporter domains lie at 24–260 (LSAE…VGRE) and 270–510 (VPIG…VMEL). 56–63 (GENGAGKS) contacts ATP.

Belongs to the ABC transporter superfamily. Carbohydrate importer 2 (CUT2) (TC 3.A.1.2) family.

Its subcellular location is the cell inner membrane. The enzyme catalyses D-ribose(out) + ATP + H2O = D-ribose(in) + ADP + phosphate + H(+). The catalysed reaction is D-galactose(out) + ATP + H2O = D-galactose(in) + ADP + phosphate + H(+). In terms of biological role, part of an ABC transporter complex involved in carbohydrate import. Could be involved in ribose, galactose and/or methyl galactoside import. Responsible for energy coupling to the transport system. The polypeptide is Putative ribose/galactose/methyl galactoside import ATP-binding protein (Rhizobium johnstonii (strain DSM 114642 / LMG 32736 / 3841) (Rhizobium leguminosarum bv. viciae)).